Consider the following 794-residue polypeptide: DNA ligase (794 aa).

Residues 1–47 (MEEDLFSLAAGKQPSQQATNETAPRAGEARENAGTDHPGNAEDPAHR) are disordered. A compositionally biased stretch (polar residues) spans 13 to 22 (QPSQQATNET). Residues 27–47 (GEARENAGTDHPGNAEDPAHR) show a composition bias toward basic and acidic residues. NAD(+) is bound by residues 73-77 (DAEYD), 122-123 (SI), and glutamate 160. Catalysis depends on lysine 162, which acts as the N6-AMP-lysine intermediate. Arginine 183, glutamate 219, lysine 335, and lysine 359 together coordinate NAD(+). 4 residues coordinate Zn(2+): cysteine 457, cysteine 460, cysteine 475, and cysteine 480. The 78-residue stretch at 717–794 (IPAGSLSGKT…EEDFYKMIGN (78 aa)) folds into the BRCT domain.

Belongs to the NAD-dependent DNA ligase family. LigA subfamily. The cofactor is Mg(2+). It depends on Mn(2+) as a cofactor.

It carries out the reaction NAD(+) + (deoxyribonucleotide)n-3'-hydroxyl + 5'-phospho-(deoxyribonucleotide)m = (deoxyribonucleotide)n+m + AMP + beta-nicotinamide D-nucleotide.. Functionally, DNA ligase that catalyzes the formation of phosphodiester linkages between 5'-phosphoryl and 3'-hydroxyl groups in double-stranded DNA using NAD as a coenzyme and as the energy source for the reaction. It is essential for DNA replication and repair of damaged DNA. This chain is DNA ligase, found in Akkermansia muciniphila (strain ATCC BAA-835 / DSM 22959 / JCM 33894 / BCRC 81048 / CCUG 64013 / CIP 107961 / Muc).